Consider the following 238-residue polypeptide: Large ribosomal subunit protein uL1 (238 aa).

This sequence belongs to the universal ribosomal protein uL1 family. Part of the 50S ribosomal subunit.

In terms of biological role, binds directly to 23S rRNA. The L1 stalk is quite mobile in the ribosome, and is involved in E site tRNA release. Protein L1 is also a translational repressor protein, it controls the translation of the L11 operon by binding to its mRNA. The polypeptide is Large ribosomal subunit protein uL1 (Picosynechococcus sp. (strain ATCC 27264 / PCC 7002 / PR-6) (Agmenellum quadruplicatum)).